We begin with the raw amino-acid sequence, 37 residues long: Non-specific lipid-transfer protein (37 aa).

This sequence belongs to the plant LTP family.

Plant non-specific lipid-transfer proteins transfer phospholipids as well as galactolipids across membranes. May play a role in wax or cutin deposition in the cell walls of expanding epidermal cells and certain secretory tissues. This Artemisia vulgaris (Mugwort) protein is Non-specific lipid-transfer protein.